Consider the following 109-residue polypeptide: Trafficking protein particle complex subunit 2-like protein (109 aa).

The protein belongs to the TRAPP small subunits family. Sedlin subfamily. Component of the multisubunit TRAPP (transport protein particle) complex, which includes at least TRAPPC2, TRAPPC2L, TRAPPC3, TRAPPC3L, TRAPPC4, TRAPPC5, TRAPPC8, TRAPPC9, TRAPPC10, TRAPPC11 and TRAPPC12. Interacts with the heterodimer TRAPPC3-TRAPPC6A.

It is found in the cytoplasm. It localises to the perinuclear region. The protein localises to the endoplasmic reticulum. The protein resides in the golgi apparatus. Functionally, may play a role in vesicular transport from endoplasmic reticulum to Golgi. This Pongo abelii (Sumatran orangutan) protein is Trafficking protein particle complex subunit 2-like protein (TRAPPC2L).